The sequence spans 1192 residues: Probable ATP-dependent RNA helicase kurz (1192 aa).

The disordered stretch occupies residues 170–214 (ELQAKRKNPNVISVEEDDEDSSSSDEDDEEAPAQSAPIAIPTPVS). Residues 183 to 200 (VEEDDEDSSSSDEDDEEA) show a composition bias toward acidic residues. The 167-residue stretch at 270–436 (METINENPIV…TRLFKIPPPL (167 aa)) folds into the Helicase ATP-binding domain. Position 283–290 (283–290 (GETGSGKT)) interacts with ATP. A DEAH box motif is present at residues 379 to 382 (DEAH). Residues 504 to 529 (APTKDVAKNGKVSEEEKEETIDDAAS) are disordered. Basic and acidic residues predominate over residues 505–517 (PTKDVAKNGKVSE). The residue at position 529 (Ser529) is a Phosphoserine. Thr530 is modified (phosphothreonine). In terms of domain architecture, Helicase C-terminal spans 540-746 (DMKRVIRNIR…DLMLQMRCMG (207 aa)). Basic and acidic residues predominate over residues 567 to 583 (DDYKLPGDDTEADMHEQ). A disordered region spans residues 567-612 (DDYKLPGDDTEADMHEQPDEDDEQEGLEEDNDDELGLEDESGMGSG). Residues 584-607 (PDEDDEQEGLEEDNDDELGLEDES) show a composition bias toward acidic residues.

This sequence belongs to the DEAD box helicase family. DEAH subfamily.

The catalysed reaction is ATP + H2O = ADP + phosphate + H(+). The chain is Probable ATP-dependent RNA helicase kurz (kz) from Drosophila melanogaster (Fruit fly).